The primary structure comprises 73 residues: MKLTCVVIVAVLLLTACQLITADDSRGTQKHRALGSTTELSLSTRCKSPGSSCSPTSYNCCRSCNPYTKRCYG.

An N-terminal signal peptide occupies residues M1 to A22. The propeptide occupies D23 to R45. Disulfide bonds link C46/C61, C53/C64, and C60/C71. 4-hydroxyproline occurs at positions 49, 55, and 66. Y72 carries the post-translational modification Tyrosine amide; in form omega-conotoxin GVIA.

It belongs to the conotoxin O1 superfamily. Expressed by the venom duct.

Its subcellular location is the secreted. Omega-conotoxins act at presynaptic membranes, they bind and block voltage-gated calcium channels (Cav). This toxin blocks N-type calcium channels (Cav2.2/CACNA1B) with a high potency (it displaces [125I]GVIA with an IC(50)=3.7-38 pM). In Conus geographus (Geography cone), this protein is Omega-conotoxin GVIA.